Consider the following 418-residue polypeptide: Nuclear hormone receptor 114 (418 aa).

The segment at residues 12-87 (DHVCLVCQDF…VGMDRNALQQ (76 aa)) is a DNA-binding region (nuclear receptor). 2 consecutive NR C4-type zinc fingers follow at residues 15 to 35 (CLVC…CVGC) and 51 to 70 (CQFE…CRYC). A disordered region spans residues 89-130 (RDPIGYTKRTRRPKKELKTTSDCSSDEGASTPPSVSPLQLSP). The 240-residue stretch at 170 to 409 (PIRSLHEALC…AFARQLFFGD (240 aa)) folds into the NR LBD domain. The AF-2 stretch occupies residues 398–409 (FSAFARQLFFGD).

The protein belongs to the nuclear hormone receptor family. In terms of tissue distribution, expressed in germ and intestinal cells and at low levels in the hypodermis.

The protein resides in the nucleus. Functionally, probable transcription factor which may have a role in detoxifying dietary metabolites arising from bacterial tryptophan metabolism. Required for fertility and involved in proper postembryonic germline development, especially germline stem cell (GSC) proliferation. Required for activation of the methionine/S-adenosylmethionine (Met/SAM) cycle in response to low levels of SAM. This is Nuclear hormone receptor 114 from Caenorhabditis elegans.